The primary structure comprises 212 residues: Ras-related protein Rab-17 (212 aa).

Ser29 carries the phosphoserine modification. 4 residues coordinate GTP: Gly31, Lys32, Ser33, and Thr50. Positions 33, 50, and 73 each coordinate Mg(2+). The short motif at 43 to 54 is the Switch 1 element; that stretch reads DFKSILPTVGCA. Residues 75 to 91 carry the Switch 2 motif; sequence AGQEKYHSVCHLYFRGA. Residues Gly76, Asn132, Lys133, Asp135, and Ala163 each contribute to the GTP site. S-geranylgeranyl cysteine attachment occurs at residues Cys209 and Cys210.

The protein belongs to the small GTPase superfamily. Rab family. Mg(2+) serves as cofactor. In terms of tissue distribution, expressed in melanocytes (at protein level).

It is found in the recycling endosome membrane. The protein localises to the melanosome. It localises to the cell projection. The protein resides in the dendrite. It carries out the reaction GTP + H2O = GDP + phosphate + H(+). Regulated by guanine nucleotide exchange factors (GEFs) which promote the exchange of bound GDP for free GTP. Regulated by GTPase activating proteins (GAPs) which increase the GTP hydrolysis activity. Inhibited by GDP dissociation inhibitors (GDIs). Functionally, the small GTPases Rab are key regulators of intracellular membrane trafficking, from the formation of transport vesicles to their fusion with membranes. Rabs cycle between an inactive GDP-bound form and an active GTP-bound form that is able to recruit to membranes different set of downstream effectors directly responsible for vesicle formation, movement, tethering and fusion. RAB17 is involved in transcytosis, the directed movement of endocytosed material through the cell and its exocytosis from the plasma membrane at the opposite side. Mainly observed in epithelial cells, transcytosis mediates for instance, the transcellular transport of immunoglobulins from the basolateral surface to the apical surface. Most probably controls membrane trafficking through apical recycling endosomes in a post-endocytic step of transcytosis. Required for melanosome transport and release from melanocytes, it also regulates dendrite and dendritic spine development. May also play a role in cell migration. The sequence is that of Ras-related protein Rab-17 from Homo sapiens (Human).